The sequence spans 183 residues: Dermatopontin (183 aa).

A Pyrrolidone carboxylic acid modification is found at glutamine 1. A Sulfotyrosine modification is found at tyrosine 5. A run of 4 repeats spans residues 8–61 (PYQQ…ACMP), 52–57 (DRQWNY), 62–117 (TPQS…CCRY), and 107–112 (DREWQF). Positions 8–117 (PYQQYHDYSD…REWQFYCCRY (110 aa)) are 2 X 53-55 AA tandem repeats. Intrachain disulfides connect cysteine 32/cysteine 59, cysteine 72/cysteine 114, cysteine 88/cysteine 115, cysteine 121/cysteine 178, and cysteine 125/cysteine 171. The segment at 52–168 (DRQWNYACMP…AVERDRQWKF (117 aa)) is 3 X 6 AA tandem repeats of D-R-[EQ]-W-[NQK]-[FY]. 4 positions are modified to sulfotyrosine: tyrosine 144, tyrosine 146, tyrosine 148, and tyrosine 149. The stretch at 163 to 168 (DRQWKF) is one 2-3 repeat. Tyrosine 176 bears the Sulfotyrosine mark.

The protein belongs to the dermatopontin family. Interacts with TGFB1, DCN and collagen. Sulfated on tyrosine residue(s). Detected in skin, skeletal muscle, heart, lung, articular cartilage, long bone and calvaria. Smaller amounts detected in kidney. Not detected in brain, liver or spleen.

The protein resides in the secreted. It is found in the extracellular space. Its subcellular location is the extracellular matrix. Functionally, seems to mediate adhesion by cell surface integrin binding. May serve as a communication link between the dermal fibroblast cell surface and its extracellular matrix environment. Enhances TGFB1 activity. Inhibits cell proliferation. Accelerates collagen fibril formation, and stabilizes collagen fibrils against low-temperature dissociation. The chain is Dermatopontin (DPT) from Sus scrofa (Pig).